The chain runs to 389 residues: Sedoheptulose-1,7-bisphosphatase, chloroplastic (389 aa).

Residues C115 and C120 are joined by a disulfide bond. Mg(2+) contacts are provided by D126, E155, D173, L175, and D176. Substrate-binding positions include 176–179, Y287, and K317; that span reads DGSS. E323 contributes to the Mg(2+) binding site.

The protein belongs to the FBPase class 1 family. Homodimer. The cofactor is Mg(2+).

It localises to the plastid. It is found in the chloroplast. The enzyme catalyses D-sedoheptulose 1,7-bisphosphate + H2O = D-sedoheptulose 7-phosphate + phosphate. The protein operates within carbohydrate biosynthesis; Calvin cycle. The chain is Sedoheptulose-1,7-bisphosphatase, chloroplastic (CSBP) from Chlamydomonas reinhardtii (Chlamydomonas smithii).